The sequence spans 196 residues: Ribosome maturation factor RimP (196 aa).

Residues 164–196 (LAPQKPNKPGPKKPGHEKKKPSNESAAGKPRAE) are disordered. The span at 173–182 (GPKKPGHEKK) shows a compositional bias: basic residues.

This sequence belongs to the RimP family.

The protein resides in the cytoplasm. In terms of biological role, required for maturation of 30S ribosomal subunits. In Xanthomonas axonopodis pv. citri (strain 306), this protein is Ribosome maturation factor RimP.